We begin with the raw amino-acid sequence, 256 residues long: UstYa family oxidase phomYc (256 aa).

The helical transmembrane segment at 38-58 (LVLVLQFVLIISLLASLHILG) threads the bilayer. N-linked (GlcNAc...) asparagine glycosylation is found at Asn-64 and Asn-132. The short motif at 158-162 (HQLHC) is the HXXHC 1 element. An N-linked (GlcNAc...) asparagine glycan is attached at Asn-179. Positions 193–197 (HIDHC) match the HXXHC 2 motif.

It belongs to the ustYa family.

The protein resides in the membrane. Its pathway is mycotoxin biosynthesis. In terms of biological role, ustYa family oxidase; part of the gene cluster that mediates the biosynthesis of the phomopsins, a group of hexapeptide mycotoxins which infects lupins and causes lupinosis disease in livestock. Within the pathway, phomYc catalyzes the desaturation of the Ile moiety into 2,3-dehydroisoleucine (dIle). The pathway starts with the processing of the precursor phomA by several endopeptidases including kexin proteases as well as the cluster-specific S41 family peptidase phomP1 and the oligopeptidase phomG to produce 10 identical copies of the hexapeptide Tyr-Val-Ile-Pro-Ile-Asp. After being excised from the precursor peptide, the core peptides are cyclized and modified post-translationally by enzymes encoded within the gene cluster. The timing and order of proteolysis of the phomA precursor and PTMs are still unknown. Two tyrosinase-like enzymes, phomQ1 and phomQ2, catalyze the chlorination and hydroxylation of Tyr, respectively. PhomYb, is proposed to be involved in the construction of the macrocyclic structure. The other 4 ustYa family proteins may be involved in PTMs that generate the unique structure of phomopsin A. PhomYa is required for the hydroxylation of C-beta of Tyr. PhomYc, phomYd, and phomYe are responsible for the biosynthesis of 2,3-dehydroisoleucine (dIle), 2,3-dehydroaspartic acid (dAsp), and 3,4-dehydroproline (dPro), respectively. While dIle formation by phomYc is indispensable for the installation of dAsp by phomYd, the order of the other PTMs have not been elucidated yet. Most of the biosynthetic enzymes likely have broad substrate specificity, and thus, there might be a metabolic grid from a precursor to phomopsin A. The enzyme(s) responsible for the biosynthesis of 3,4-dehydrovaline (dVal) have also not been identified yet. Finally, phomM acts as an S-adenosylmethionine-dependent alpha-N-methyltransferase that catalyzes two successive N-methylation reactions, converting N-desmethyl-phomopsin A to phomopsin A and phomopsin A further to an N,N-dimethylated congener called phomopsin E. This chain is UstYa family oxidase phomYc, found in Diaporthe leptostromiformis (Lupinosis disease fungus).